The sequence spans 524 residues: Cytochrome P450 1A1 (524 aa).

The segment at 33 to 44 (LRTQVPKGLKTP) is mitochondrial targeting signal. O-linked (GlcNAc) serine glycosylation is present at serine 71. Residue phenylalanine 228 participates in substrate binding. Residue cysteine 461 coordinates heme.

It belongs to the cytochrome P450 family. In terms of assembly, interacts with cytosolic chaperones HSP70 and HSP90; this interaction is required for initial targeting to mitochondria. Interacts (via mitochondrial targeting signal) with TOMM40 (via N-terminus); this interaction is required for translocation across the mitochondrial outer membrane. Heme serves as cofactor.

It localises to the endoplasmic reticulum membrane. The protein localises to the mitochondrion inner membrane. Its subcellular location is the microsome membrane. The protein resides in the cytoplasm. It catalyses the reaction an organic molecule + reduced [NADPH--hemoprotein reductase] + O2 = an alcohol + oxidized [NADPH--hemoprotein reductase] + H2O + H(+). It carries out the reaction estrone + reduced [NADPH--hemoprotein reductase] + O2 = 2-hydroxyestrone + oxidized [NADPH--hemoprotein reductase] + H2O + H(+). The catalysed reaction is estrone + reduced [NADPH--hemoprotein reductase] + O2 = 4-hydroxyestrone + oxidized [NADPH--hemoprotein reductase] + H2O + H(+). The enzyme catalyses estrone + reduced [NADPH--hemoprotein reductase] + O2 = 6alpha-hydroxyestrone + oxidized [NADPH--hemoprotein reductase] + H2O + H(+). It catalyses the reaction estrone + reduced [NADPH--hemoprotein reductase] + O2 = 15alpha-hydroxyestrone + oxidized [NADPH--hemoprotein reductase] + H2O + H(+). It carries out the reaction estrone + reduced [NADPH--hemoprotein reductase] + O2 = 16alpha-hydroxyestrone + oxidized [NADPH--hemoprotein reductase] + H2O + H(+). The catalysed reaction is 17beta-estradiol + reduced [NADPH--hemoprotein reductase] + O2 = 2-hydroxy-17beta-estradiol + oxidized [NADPH--hemoprotein reductase] + H2O + H(+). The enzyme catalyses 17beta-estradiol + reduced [NADPH--hemoprotein reductase] + O2 = 4-hydroxy-17beta-estradiol + oxidized [NADPH--hemoprotein reductase] + H2O + H(+). It catalyses the reaction 17beta-estradiol + reduced [NADPH--hemoprotein reductase] + O2 = 6alpha-hydroxy-17beta-estradiol + oxidized [NADPH--hemoprotein reductase] + H2O + H(+). It carries out the reaction 17beta-estradiol + reduced [NADPH--hemoprotein reductase] + O2 = 7alpha-hydroxy-17beta-estradiol + oxidized [NADPH--hemoprotein reductase] + H2O + H(+). The catalysed reaction is 17beta-estradiol + reduced [NADPH--hemoprotein reductase] + O2 = 15alpha-hydroxy-17beta-estradiol + oxidized [NADPH--hemoprotein reductase] + H2O + H(+). The enzyme catalyses (5Z,8Z,11Z)-eicosatrienoate + reduced [NADPH--hemoprotein reductase] + O2 = 19-hydroxy-(5Z,8Z,11Z)-eicosatrienoate + oxidized [NADPH--hemoprotein reductase] + H2O + H(+). It catalyses the reaction (5Z,8Z,11Z,14Z)-eicosatetraenoate + reduced [NADPH--hemoprotein reductase] + O2 = 16-hydroxy-(5Z,8Z,11Z,14Z)-eicosatetraenoate + oxidized [NADPH--hemoprotein reductase] + H2O + H(+). It carries out the reaction (5Z,8Z,11Z,14Z)-eicosatetraenoate + reduced [NADPH--hemoprotein reductase] + O2 = 17-hydroxy-(5Z,8Z,11Z,14Z)-eicosatetraenoate + oxidized [NADPH--hemoprotein reductase] + H2O + H(+). The catalysed reaction is (5Z,8Z,11Z,14Z)-eicosatetraenoate + reduced [NADPH--hemoprotein reductase] + O2 = 18-hydroxy-(5Z,8Z,11Z,14Z)-eicosatetraenoate + oxidized [NADPH--hemoprotein reductase] + H2O + H(+). The enzyme catalyses (5Z,8Z,11Z,14Z)-eicosatetraenoate + reduced [NADPH--hemoprotein reductase] + O2 = 19-hydroxy-(5Z,8Z,11Z,14Z)-eicosatetraenoate + oxidized [NADPH--hemoprotein reductase] + H2O + H(+). It catalyses the reaction (5Z,8Z,11Z,14Z,17Z)-eicosapentaenoate + reduced [NADPH--hemoprotein reductase] + O2 = 19-hydroxy-(5Z,8Z,11Z,14Z,17Z)-eicosapentaenoate + oxidized [NADPH--hemoprotein reductase] + H2O + H(+). It carries out the reaction (5Z,8Z,11Z,14Z)-eicosatetraenoate + reduced [NADPH--hemoprotein reductase] + O2 = (8R,9S)-epoxy-(5Z,11Z,14Z)-eicosatrienoate + oxidized [NADPH--hemoprotein reductase] + H2O + H(+). The catalysed reaction is (5Z,8Z,11Z,14Z)-eicosatetraenoate + reduced [NADPH--hemoprotein reductase] + O2 = (11R,12S)-epoxy-(5Z,8Z,14Z)-eicosatrienoate + oxidized [NADPH--hemoprotein reductase] + H2O + H(+). The enzyme catalyses (5Z,8Z,11Z,14Z)-eicosatetraenoate + reduced [NADPH--hemoprotein reductase] + O2 = (14S,15R)-epoxy-(5Z,8Z,11Z)-eicosatrienoate + oxidized [NADPH--hemoprotein reductase] + H2O + H(+). It catalyses the reaction (5Z,8Z,11Z,14Z)-eicosatetraenoate + reduced [NADPH--hemoprotein reductase] + O2 = (14R,15S)-epoxy-(5Z,8Z,11Z)-eicosatrienoate + oxidized [NADPH--hemoprotein reductase] + H2O + H(+). It carries out the reaction (5Z,8Z,11Z,14Z,17Z)-eicosapentaenoate + reduced [NADPH--hemoprotein reductase] + O2 = (17R,18S)-epoxy-(5Z,8Z,11Z,14Z)-eicosatetraenoate + oxidized [NADPH--hemoprotein reductase] + H2O + H(+). The catalysed reaction is (4Z,7Z,10Z,13Z,16Z,19Z)-docosahexaenoate + reduced [NADPH--hemoprotein reductase] + O2 = (19S,20R)-epoxy-(4Z,7Z,10Z,13Z,16Z)-docosapentaenoate + oxidized [NADPH--hemoprotein reductase] + H2O + H(+). The enzyme catalyses (4Z,7Z,10Z,13Z,16Z,19Z)-docosahexaenoate + reduced [NADPH--hemoprotein reductase] + O2 = (19R,20S)-epoxy-(4Z,7Z,10Z,13Z,16Z)-docosapentaenoate + oxidized [NADPH--hemoprotein reductase] + H2O + H(+). It catalyses the reaction all-trans-retinol + reduced [NADPH--hemoprotein reductase] + O2 = all-trans-retinal + oxidized [NADPH--hemoprotein reductase] + 2 H2O + H(+). It carries out the reaction all-trans-retinal + reduced [NADPH--hemoprotein reductase] + O2 = all-trans-retinoate + oxidized [NADPH--hemoprotein reductase] + H2O + 2 H(+). The catalysed reaction is (13S)-hydroperoxy-(9Z,11E)-octadecadienoate = 13-oxo-(9Z,11E)-octadecadienoate + H2O. The enzyme catalyses (12S)-hydroperoxy-(5Z,8Z,10E,14Z)-eicosatetraenoate = 12-oxo-(5Z,8Z,10E,14Z)-eicosatetraenoate + H2O. It catalyses the reaction (15S)-hydroperoxy-(5Z,8Z,11Z,13E)-eicosatetraenoate = 15-oxo-(5Z,8Z,11Z,13E)-eicosatetraenoate + H2O. It carries out the reaction (5S)-hydroperoxy-(6E,8Z,11Z,14Z)-eicosatetraenoate = 5-oxo-(6E,8Z,11Z,14Z)-eicosatetraenoate + H2O. It participates in steroid hormone biosynthesis. It functions in the pathway lipid metabolism; fatty acid metabolism. Its pathway is cofactor metabolism; retinol metabolism. A cytochrome P450 monooxygenase involved in the metabolism of various endogenous substrates, including fatty acids, steroid hormones and vitamins. Mechanistically, uses molecular oxygen inserting one oxygen atom into a substrate, and reducing the second into a water molecule, with two electrons provided by NADPH via cytochrome P450 reductase (CPR; NADPH-ferrihemoprotein reductase). Catalyzes the hydroxylation of carbon-hydrogen bonds. Exhibits high catalytic activity for the formation of hydroxyestrogens from estrone (E1) and 17beta-estradiol (E2), namely 2-hydroxy E1 and E2, as well as D-ring hydroxylated E1 and E2 at the C15alpha and C16alpha positions. Displays different regioselectivities for polyunsaturated fatty acids (PUFA) hydroxylation. Catalyzes the epoxidation of double bonds of certain PUFA. Converts arachidonic acid toward epoxyeicosatrienoic acid (EET) regioisomers, 8,9-, 11,12-, and 14,15-EET, that function as lipid mediators in the vascular system. Displays an absolute stereoselectivity in the epoxidation of eicosapentaenoic acid (EPA) producing the 17(R),18(S) enantiomer. May play an important role in all-trans retinoic acid biosynthesis in extrahepatic tissues. Catalyzes two successive oxidative transformation of all-trans retinol to all-trans retinal and then to the active form all-trans retinoic acid. May also participate in eicosanoids metabolism by converting hydroperoxide species into oxo metabolites (lipoxygenase-like reaction, NADPH-independent). In Mesocricetus auratus (Golden hamster), this protein is Cytochrome P450 1A1 (CYP1A1).